A 203-amino-acid chain; its full sequence is MRLWLIRHGETQANIDGLYSGHAPTPLTARGIEQAQNLHTLLHGVSFDLVLCSELERAQHTARLVLSDRQLPVQIIPELNEMFFGDWEMRHHRDLMQEDAENYSAWCNDWQHAIPTNGEGFQAFSQRVERFIARLSEFQHYQNILVVSHQGVLSLLIARLIGMPAEAMWHFRVDQGCWSAIDINQKFATLRVLNSRAIGVENA.

His-8 (tele-phosphohistidine intermediate) is an active-site residue. Glu-81 functions as the Proton donor/acceptor in the catalytic mechanism.

It belongs to the phosphoglycerate mutase family.

It carries out the reaction adenosylcob(III)alamin 5'-phosphate + H2O = adenosylcob(III)alamin + phosphate. It catalyses the reaction alpha-ribazole 5'-phosphate + H2O = alpha-ribazole + phosphate. The protein operates within nucleoside biosynthesis; alpha-ribazole biosynthesis; alpha-ribazole from 5,6-dimethylbenzimidazole: step 2/2. In terms of biological role, catalyzes the conversion of adenosylcobalamin 5'-phosphate to adenosylcobalamin (vitamin B12); involved in the assembly of the nucleotide loop of cobalamin. Also catalyzes the hydrolysis of the phospho group from alpha-ribazole 5'-phosphate to form alpha-ribazole. This chain is Adenosylcobalamin/alpha-ribazole phosphatase (cobC), found in Escherichia coli (strain K12).